Consider the following 1076-residue polypeptide: Nucleoporin NUP1 (1076 aa).

Residues 1 to 11 are compositionally biased toward low complexity; sequence MSSNTSSVMSS. The disordered stretch occupies residues 1–39; that stretch reads MSSNTSSVMSSPRVEKRSFSSTLKSFFTNPNKKRPSSKK. The residue at position 2 (Ser2) is an N-acetylserine. Residues 19–30 are compositionally biased toward polar residues; the sequence is FSSTLKSFFTNP. Ser54 and Ser161 each carry phosphoserine. Disordered regions lie at residues 143 to 183 and 224 to 260; these read SQSK…TNVG and KKDN…ATGP. Polar residues-rich tracts occupy residues 154 to 170 and 243 to 260; these read LCTS…SCTR and NRNN…ATGP. The FXF 1 repeat unit spans residues 336-338; it reads FDF. Thr381 is modified (phosphothreonine). Ser383 carries the post-translational modification Phosphoserine. The FXF 2 repeat unit spans residues 384-386; the sequence is FNF. The interval 403–518 is disordered; sequence TTLFNFGGKS…SFVFGASDKQ (116 aa). FXFG repeat units lie at residues 406–409 and 422–425; these read FNFG and FKFG. Over residues 426-439 the composition is skewed to basic and acidic residues; it reads KTSEKSENHTESDA. 2 FXFG repeats span residues 448–451 and 484–487; these read FSFG and FDFG. A compositionally biased stretch (basic and acidic residues) spans 488 to 505; the sequence is KTGDQKETKKGESEKDAS. 4 FXFG repeats span residues 510 to 513, 525 to 528, 543 to 546, and 571 to 574; these read FVFG and FTFG. Residues 548–743 form a disordered region; it reads AATAKETHTK…SMKSTASTAA (196 aa). FXF repeat units lie at residues 591-593, 614-616, 636-638, and 657-659; these read FSF and FTF. 2 stretches are compositionally biased toward polar residues: residues 634-649 and 658-667; these read PTFS…SSVV and TFASSKTSQP. The residue at position 637 (Ser637) is a Phosphoserine. Residues 671-674 form an FXFG 9 repeat; it reads FSFG. One copy of the FXF 7 repeat lies at 689 to 691; sequence FSF. 2 FXFG repeats span residues 708–711 and 727–730; these read FTFG and FSFG. The span at 708-723 shows a compositional bias: low complexity; sequence FTFGGSTTNNTTTTST. An FXF 8 repeat occupies 753–755; that stretch reads FSF. The FXFG 12 repeat unit spans residues 800–803; sequence FSFG. FXF repeat units follow at residues 819–821 and 866–868; these read FSF and FGF. Residues 885–888 form an FXFG 13 repeat; that stretch reads FNFG. Residues 929–931 form an FXF 11 repeat; that stretch reads FNF. The tract at residues 940–979 is disordered; that stretch reads GGSVFNMNGNTNANTVFAGSNNQPHQSQTPSFNTNSSFTP. Residues 944–964 show a composition bias toward polar residues; that stretch reads FNMNGNTNANTVFAGSNNQPH. The span at 965-979 shows a compositional bias: low complexity; sequence QSQTPSFNTNSSFTP. FG repeat units lie at residues 1008–1009, 1027–1028, and 1038–1039; these read FG. The interval 1025 to 1054 is disordered; that stretch reads SIFGGAGGVPTTSFGQPQSAPNQMGMGTNN. Residues 1034-1045 show a composition bias toward polar residues; it reads PTTSFGQPQSAP. Residues 1040 to 1076 are interaction with KAP95; that stretch reads QPQSAPNQMGMGTNNGMSMGGGVMANRKIARMRHSKR.

Component of the nuclear pore complex (NPC). NPC constitutes the exclusive means of nucleocytoplasmic transport. NPCs allow the passive diffusion of ions and small molecules and the active, nuclear transport receptor-mediated bidirectional transport of macromolecules such as proteins, RNAs, ribonucleoparticles (RNPs), and ribosomal subunits across the nuclear envelope. Due to its 8-fold rotational symmetry, all subunits are present with 8 copies or multiples thereof. Interacts through its FG repeats with nuclear transport receptors. Binds to the nuclear basket of the NPC through NUP60. Interacts with KAP122. Phosphorylated by CDC28.

It localises to the nucleus. It is found in the nuclear pore complex. Its subcellular location is the nucleus membrane. In terms of biological role, functions as a component of the nuclear pore complex (NPC). NPC components, collectively referred to as nucleoporins (NUPs), can play the role of both NPC structural components and of docking or interaction partners for transiently associated nuclear transport factors. Active directional transport is assured by both, a Phe-Gly (FG) repeat affinity gradient for these transport factors across the NPC and a transport cofactor concentration gradient across the nuclear envelope (GSP1 and GSP2 GTPases associated predominantly with GTP in the nucleus, with GDP in the cytoplasm). As one of the FG repeat nucleoporins NUP1 is involved in interactions with and guidance of nuclear transport receptors such as SRP1-KAP95 (importin alpha and beta) through the NPC. Like the closely related NUP2 it also plays an important role in disassembling and recycling SRP1-KAP95 to the cytoplasm after nuclear import. Upon entry of the heterotrimeric SRP1-KAP95-cargo complex in the nucleus, NUP1 binds through its C-terminus to KAP95, thus accelerating the release of KAP95 and, indirectly, of the nuclear localization signal (NLS)-containing cargo from the SRP1-KAP95-cargo complex. The protein is Nucleoporin NUP1 (NUP1) of Saccharomyces cerevisiae (strain ATCC 204508 / S288c) (Baker's yeast).